Here is a 401-residue protein sequence, read N- to C-terminus: Tyrosine--tRNA ligase (401 aa).

The short motif at 42–51 (PTAPDLHLGH) is the 'HIGH' region element. The 'KMSKS' region signature appears at 226 to 230 (KMSKS). An ATP-binding site is contributed by Lys-229. In terms of domain architecture, S4 RNA-binding spans 336 to 397 (IALAQLLKQI…GKRRIAKLSI (62 aa)).

This sequence belongs to the class-I aminoacyl-tRNA synthetase family. TyrS type 2 subfamily. As to quaternary structure, homodimer.

The protein resides in the cytoplasm. The enzyme catalyses tRNA(Tyr) + L-tyrosine + ATP = L-tyrosyl-tRNA(Tyr) + AMP + diphosphate + H(+). Functionally, catalyzes the attachment of tyrosine to tRNA(Tyr) in a two-step reaction: tyrosine is first activated by ATP to form Tyr-AMP and then transferred to the acceptor end of tRNA(Tyr). This Legionella pneumophila (strain Lens) protein is Tyrosine--tRNA ligase.